Reading from the N-terminus, the 219-residue chain is Aspartic protease inhibitor 10 (219 aa).

A signal peptide spans 1-23 (MMKCLFLLCLCLVPIVVFSSTFT). The propeptide occupies 24 to 32 (SQNLIDLPS). Residues 26–31 (NLIDLP) carry the Vacuolar targeting signal motif. Asn-51 carries an N-linked (GlcNAc...) asparagine glycan. 2 disulfides stabilise this stretch: Cys-80-Cys-125 and Cys-173-Cys-184.

This sequence belongs to the protease inhibitor I3 (leguminous Kunitz-type inhibitor) family. In tubers and green buds of untreated plants. After abscisic acid treatment or mechanical wounding is mostly accumulated in leaves, to a lesser extent in stems, but not in roots.

Its function is as follows. Inhibitor of cathepsin D (aspartic protease) and trypsin (serine protease). Protects the plant by inhibiting proteases of invading organisms. In Solanum tuberosum (Potato), this protein is Aspartic protease inhibitor 10 (CDI).